The chain runs to 131 residues: Probable flagellum biosynthesis repressor protein FlbT (131 aa).

This sequence belongs to the FlbT family.

Functionally, has a post-transcriptional repressor function in flagellum biogenesis. Associates with the 5'-UTR of fljK mRNA and promotes its degradation. This Caulobacter sp. (strain K31) protein is Probable flagellum biosynthesis repressor protein FlbT.